A 315-amino-acid polypeptide reads, in one-letter code: Phosphatidylglycerol--prolipoprotein diacylglyceryl transferase (315 aa).

The next 2 helical transmembrane spans lie at 19–39 and 93–113; these read FTIHMYAICILIGICVAVWIL and VWEGGMAIFGGISVGTLVAFL. Position 141 (Arg141) interacts with a 1,2-diacyl-sn-glycero-3-phospho-(1'-sn-glycerol). The next 2 membrane-spanning stretches (helical) occupy residues 188–208 and 256–276; these read LFHPTFLYEMIWNLIGAALII and VWTAIIVFVLGCILFVVLYQY.

Belongs to the Lgt family.

The protein resides in the cell membrane. It catalyses the reaction L-cysteinyl-[prolipoprotein] + a 1,2-diacyl-sn-glycero-3-phospho-(1'-sn-glycerol) = an S-1,2-diacyl-sn-glyceryl-L-cysteinyl-[prolipoprotein] + sn-glycerol 1-phosphate + H(+). The protein operates within protein modification; lipoprotein biosynthesis (diacylglyceryl transfer). Catalyzes the transfer of the diacylglyceryl group from phosphatidylglycerol to the sulfhydryl group of the N-terminal cysteine of a prolipoprotein, the first step in the formation of mature lipoproteins. The polypeptide is Phosphatidylglycerol--prolipoprotein diacylglyceryl transferase (Bifidobacterium longum (strain NCC 2705)).